We begin with the raw amino-acid sequence, 96 residues long: Protein RnfH (96 aa).

The protein belongs to the UPF0125 (RnfH) family.

This Citrobacter koseri (strain ATCC BAA-895 / CDC 4225-83 / SGSC4696) protein is Protein RnfH.